A 298-amino-acid chain; its full sequence is MKLQTLQALICIEEVGSLRAAAQLLHLSQPALSAAIQQLEDELKAPLLVRTKRGVSLTSFGQAFMKHARLIVTESRRAQEEIGQLRGRWEGHITFAASPAIALAALPLALASFAREFPDVTVNVRDGMYPAVSPQLRDGTLDFALTAAHKHDIDTDLEAQPLYVSDVVIVGQRQHPMANATRLAELQECRWAFSSAPRGPGAIIRNAFARYGLPEPKLGLVCESFLALPGVVAHSDLLTTMPRTLYERNAFKDQLCSIPLQDALPNPTIYVLRRHDLPVTPAAAGLIRWIQHHALQTG.

The HTH lysR-type domain maps to 1 to 58 (MKLQTLQALICIEEVGSLRAAAQLLHLSQPALSAAIQQLEDELKAPLLVRTKRGVSLT). Positions 18 to 37 (LRAAAQLLHLSQPALSAAIQ) form a DNA-binding region, H-T-H motif. Toluene-4-sulfonate contacts are provided by serine 98 and alanine 100.

This sequence belongs to the LysR transcriptional regulatory family. As to quaternary structure, homotetramer. Dimer of dimers related by a twofold axis.

Sensitive to oxygen. Functionally, regulates expression of the tsaMBCD1 operon and of tsaT in response to p-toluenesulfonate (TSA). Acts by binding directly to the promoter region. Binding to the tsa promoter depends on TSA concentration. This is HTH-type transcriptional regulator TsaR (tsaR) from Comamonas testosteroni (Pseudomonas testosteroni).